The chain runs to 192 residues: Ethylene-responsive transcription factor ERF027 (192 aa).

The segment at residues 18–74 (VYRGIRCRSGKWVSEIREPRKTTRIWLGTYPMAEMAAAAYDVAAMALKGREAVLNFP) is a DNA-binding region (AP2/ERF). Disordered regions lie at residues 104 to 132 (CEEG…HVDN) and 167 to 192 (APPS…LWGY). Positions 179-192 (DSPENSNDEDLWGY) are enriched in acidic residues.

It belongs to the AP2/ERF transcription factor family. ERF subfamily.

Its subcellular location is the nucleus. In terms of biological role, probably acts as a transcriptional activator. Binds to the GCC-box pathogenesis-related promoter element. May be involved in the regulation of gene expression by stress factors and by components of stress signal transduction pathways. The sequence is that of Ethylene-responsive transcription factor ERF027 (ERF027) from Arabidopsis thaliana (Mouse-ear cress).